A 419-amino-acid polypeptide reads, in one-letter code: UDP-N-acetylglucosamine 1-carboxyvinyltransferase (419 aa).

22–23 contributes to the phosphoenolpyruvate binding site; sequence KN. Arg91 is a UDP-N-acetyl-alpha-D-glucosamine binding site. The active-site Proton donor is the Cys115. Cys115 is modified (2-(S-cysteinyl)pyruvic acid O-phosphothioketal). UDP-N-acetyl-alpha-D-glucosamine-binding positions include 120 to 124, 160 to 163, Asp305, and Ile327; these read RPVDL and KVSV.

Belongs to the EPSP synthase family. MurA subfamily.

It localises to the cytoplasm. It catalyses the reaction phosphoenolpyruvate + UDP-N-acetyl-alpha-D-glucosamine = UDP-N-acetyl-3-O-(1-carboxyvinyl)-alpha-D-glucosamine + phosphate. Its pathway is cell wall biogenesis; peptidoglycan biosynthesis. In terms of biological role, cell wall formation. Adds enolpyruvyl to UDP-N-acetylglucosamine. The sequence is that of UDP-N-acetylglucosamine 1-carboxyvinyltransferase from Citrobacter koseri (strain ATCC BAA-895 / CDC 4225-83 / SGSC4696).